The chain runs to 105 residues: Small ribosomal subunit protein uS10 (105 aa).

Belongs to the universal ribosomal protein uS10 family. As to quaternary structure, part of the 30S ribosomal subunit.

Involved in the binding of tRNA to the ribosomes. The polypeptide is Small ribosomal subunit protein uS10 (Rickettsia bellii (strain OSU 85-389)).